A 199-amino-acid chain; its full sequence is Recombination protein RecR (199 aa).

The C4-type zinc-finger motif lies at 57–72 (CEICGNLDTKSICHIC). Residues 80-175 (STIAIVETVA…KISRLASGIP (96 aa)) enclose the Toprim domain.

It belongs to the RecR family.

Its function is as follows. May play a role in DNA repair. It seems to be involved in an RecBC-independent recombinational process of DNA repair. It may act with RecF and RecO. This Rickettsia prowazekii (strain Madrid E) protein is Recombination protein RecR.